The sequence spans 335 residues: Nod factor export ATP-binding protein I (335 aa).

A compositionally biased stretch (basic and acidic residues) spans 1-10; the sequence is MTQEVPRRLE. The disordered stretch occupies residues 1–22; that stretch reads MTQEVPRRLEPSPFEWKGDAGP. One can recognise an ABC transporter domain in the interval 37–267; the sequence is IDLASVTKSY…KIGCQVIEIY (231 aa). 69-76 provides a ligand contact to ATP; that stretch reads GPNGAGKS.

Belongs to the ABC transporter superfamily. Lipooligosaccharide exporter (TC 3.A.1.102) family. As to quaternary structure, the complex is composed of two ATP-binding proteins (NodI) and two transmembrane proteins (NodJ).

It localises to the cell inner membrane. Part of the ABC transporter complex NodIJ involved in the export of the nodulation factors (Nod factors), the bacterial signal molecules that induce symbiosis and subsequent nodulation induction. Nod factors are LCO (lipo-chitin oligosaccharide), a modified beta-1,4-linked N-acetylglucosamine oligosaccharide. This subunit is responsible for energy coupling to the transport system. This chain is Nod factor export ATP-binding protein I, found in Rhizobium meliloti (Ensifer meliloti).